The chain runs to 56 residues: Large ribosomal subunit protein bL32 (56 aa).

Residues 1–56 (MAVQQNRKTRSKRGMRRSHDALSAPTLSQDKETGTTHRRHHVAPDGFYRGRKVVDV) are disordered. The span at 7–16 (RKTRSKRGMR) shows a compositional bias: basic residues.

The protein belongs to the bacterial ribosomal protein bL32 family.

This chain is Large ribosomal subunit protein bL32, found in Chromohalobacter salexigens (strain ATCC BAA-138 / DSM 3043 / CIP 106854 / NCIMB 13768 / 1H11).